A 556-amino-acid chain; its full sequence is 2-succinyl-5-enolpyruvyl-6-hydroxy-3-cyclohexene-1-carboxylate synthase (556 aa).

The protein belongs to the TPP enzyme family. MenD subfamily. As to quaternary structure, homodimer. The cofactor is Mg(2+). Mn(2+) is required as a cofactor. Thiamine diphosphate serves as cofactor.

It carries out the reaction isochorismate + 2-oxoglutarate + H(+) = 5-enolpyruvoyl-6-hydroxy-2-succinyl-cyclohex-3-ene-1-carboxylate + CO2. Its pathway is quinol/quinone metabolism; 1,4-dihydroxy-2-naphthoate biosynthesis; 1,4-dihydroxy-2-naphthoate from chorismate: step 2/7. It functions in the pathway quinol/quinone metabolism; menaquinone biosynthesis. Catalyzes the thiamine diphosphate-dependent decarboxylation of 2-oxoglutarate and the subsequent addition of the resulting succinic semialdehyde-thiamine pyrophosphate anion to isochorismate to yield 2-succinyl-5-enolpyruvyl-6-hydroxy-3-cyclohexene-1-carboxylate (SEPHCHC). In Staphylococcus haemolyticus (strain JCSC1435), this protein is 2-succinyl-5-enolpyruvyl-6-hydroxy-3-cyclohexene-1-carboxylate synthase.